Here is a 192-residue protein sequence, read N- to C-terminus: uncharacterized protein (192 aa).

A run of 6 helical transmembrane segments spans residues 5–22, 42–61, 66–88, 101–118, 122–139, and 159–181; these read VPPLFFVCALFFAEGIGL, FLFLGGILITGNWVCIHYVY, LRFLTPLGVGASAFCLSTCSGKL, WGLLYALVFYITYTALNL, LVMWGVSCVGFLCFSTIL, and ALLLASMGFIALSLYGTDELWLF.

It localises to the cell membrane. This is an uncharacterized protein from Treponema pallidum (strain Nichols).